The chain runs to 157 residues: 2-C-methyl-D-erythritol 2,4-cyclodiphosphate synthase (157 aa).

2 residues coordinate a divalent metal cation: aspartate 8 and histidine 10. Residues 8–10 (DVH) and 34–35 (HS) each bind 4-CDP-2-C-methyl-D-erythritol 2-phosphate. Histidine 42 contributes to the a divalent metal cation binding site. Residues 56–58 (DIG), 61–65 (FPDTD), 132–135 (TTEE), and phenylalanine 139 each bind 4-CDP-2-C-methyl-D-erythritol 2-phosphate.

Belongs to the IspF family. Homotrimer. A divalent metal cation is required as a cofactor.

The enzyme catalyses 4-CDP-2-C-methyl-D-erythritol 2-phosphate = 2-C-methyl-D-erythritol 2,4-cyclic diphosphate + CMP. The protein operates within isoprenoid biosynthesis; isopentenyl diphosphate biosynthesis via DXP pathway; isopentenyl diphosphate from 1-deoxy-D-xylulose 5-phosphate: step 4/6. Its function is as follows. Involved in the biosynthesis of isopentenyl diphosphate (IPP) and dimethylallyl diphosphate (DMAPP), two major building blocks of isoprenoid compounds. Catalyzes the conversion of 4-diphosphocytidyl-2-C-methyl-D-erythritol 2-phosphate (CDP-ME2P) to 2-C-methyl-D-erythritol 2,4-cyclodiphosphate (ME-CPP) with a corresponding release of cytidine 5-monophosphate (CMP). This is 2-C-methyl-D-erythritol 2,4-cyclodiphosphate synthase from Clostridium botulinum (strain Alaska E43 / Type E3).